Consider the following 250-residue polypeptide: Phosphoribosylaminoimidazole-succinocarboxamide synthase (250 aa).

Belongs to the SAICAR synthetase family.

The enzyme catalyses 5-amino-1-(5-phospho-D-ribosyl)imidazole-4-carboxylate + L-aspartate + ATP = (2S)-2-[5-amino-1-(5-phospho-beta-D-ribosyl)imidazole-4-carboxamido]succinate + ADP + phosphate + 2 H(+). It participates in purine metabolism; IMP biosynthesis via de novo pathway; 5-amino-1-(5-phospho-D-ribosyl)imidazole-4-carboxamide from 5-amino-1-(5-phospho-D-ribosyl)imidazole-4-carboxylate: step 1/2. This chain is Phosphoribosylaminoimidazole-succinocarboxamide synthase, found in Picosynechococcus sp. (strain ATCC 27264 / PCC 7002 / PR-6) (Agmenellum quadruplicatum).